Consider the following 1273-residue polypeptide: Ras-specific guanine nucleotide-releasing factor 1 (1273 aa).

In terms of domain architecture, PH 1 spans 22 to 129 (DGTRKGYLSK…WVAAIAHASY (108 aa)). Residues 204–229 (KKIKKVQSFLRGWLCRRKWKTIIQDY) enclose the IQ domain. The 187-residue stretch at 240 to 426 (KRNQVVFSML…EELSRIMHDE (187 aa)) folds into the DH domain. A PH 2 domain is found at 467 to 584 (PMSEKGKITR…WTSDISQCVD (118 aa)). Residues Ser-577 and Ser-626 each carry the phosphoserine; by PLK2 modification. The 118-residue stretch at 644–761 (KVLQIRYASV…SRRRKLSLNI (118 aa)) folds into the N-terminal Ras-GEF domain. Residues 724-754 (YGEPPKSPRATRKFSSPPPLSITKTSSPSRR) are disordered. Ser-758 is modified (phosphoserine). Phosphoserine; by PLK2 occurs at positions 779 and 800. Residues 809 to 874 (TNKIPDEGDT…PKSVKNKNSS (66 aa)) are disordered. Over residues 842 to 854 (SDIDQNQSDDGDT) the composition is skewed to acidic residues. The segment covering 855–867 (ETSPTKSPTTPKS) has biased composition (low complexity). Residues 1038–1270 (SALEIAEQLT…YESSLRIEPK (233 aa)) form the Ras-GEF domain.

As to quaternary structure, homooligomer and heterooligomer with RASGRF2. Interacts with USP8, thereby regulating its stability. In terms of processing, phosphorylated by PLK2, leading to ubiquitination and degradation by the proteasome. Post-translationally, ubiquitinated and degraded following phosphorylation by PLK2. Phosphorylated by SRC and LCK. Phosphorylation by LCK increases its capacity to stimulate the GDP/GTP exchange on Ras, whereas its phosphorylation by SRC seems not to have an effect on stimulation activity.

Functionally, promotes the exchange of Ras-bound GDP by GTP. The polypeptide is Ras-specific guanine nucleotide-releasing factor 1 (RASGRF1) (Homo sapiens (Human)).